The primary structure comprises 60 residues: Potassium channel toxin Tst-beta-KTx (60 aa).

The BetaSPN-type CS-alpha/beta domain maps to 26-60 (QFGCPAYEGYCNDHCNDIERKDGECHGFKCKCAKD). Cystine bridges form between cysteine 29/cysteine 50, cysteine 36/cysteine 55, and cysteine 40/cysteine 57.

Belongs to the long chain scorpion toxin family. Class 1 subfamily. In terms of tissue distribution, expressed by the venom gland.

Its subcellular location is the secreted. In terms of biological role, inhibits voltage-gated potassium channels Kv1.1/KCNA1, Kv1.2/KCNA2, and Kv1.3/KCNA3. Its function is as follows. Does not induce hemolytic activity, lactate dehydrogenase (LDH) release from mast cells, mast cell degranulation, and antimicrobial effects. In vivo, injection into mice causes moderate edema formation, but induces very weak or no change in nociceptive sensibility. It also reduces mice locomotion, suggesting an increase in anxiety, but causes no alteration in rearing (standing on hind limbs). The chain is Potassium channel toxin Tst-beta-KTx from Tityus stigmurus (Brazilian scorpion).